Consider the following 359-residue polypeptide: MSTENTLSVADLARENIRNLVPYQSARRLGGNGDVWLNANEFPTAVEFQLTQQTLNRYPECQPKAVIENYAQYAGVKPEQVLVSRGADEGIELVIRAFCEPGKDAILYCPPTYGMYSVSAETIGVERRTVPALENWQLDLQGISDNLDGTKVAFVCSPNNPTGQLINPQDLRTLLELTRGKAIVVADEAYIEFCPQATLTGWLVEYPHLVILRTLSKAFALAGLRCGFTLANEEVINLLLKVIAPYPLSTPVADIAAQALSPQGINAMRDRVAQTVQERQYLVNALQQTACVEHVFDSETNYILARFTASSSVFKSLWDQGIILRDQNKQPSLSGCLRITVGTRQENQRVIDALRAEPV.

Lys-217 is subject to N6-(pyridoxal phosphate)lysine.

The protein belongs to the class-II pyridoxal-phosphate-dependent aminotransferase family. Histidinol-phosphate aminotransferase subfamily. As to quaternary structure, homodimer. Requires pyridoxal 5'-phosphate as cofactor.

The enzyme catalyses L-histidinol phosphate + 2-oxoglutarate = 3-(imidazol-4-yl)-2-oxopropyl phosphate + L-glutamate. Its pathway is amino-acid biosynthesis; L-histidine biosynthesis; L-histidine from 5-phospho-alpha-D-ribose 1-diphosphate: step 7/9. The sequence is that of Histidinol-phosphate aminotransferase from Salmonella paratyphi A (strain ATCC 9150 / SARB42).